Consider the following 513-residue polypeptide: Glycine/sarcosine/betaine reductase complex component C subunit beta (513 aa).

As to quaternary structure, heterooctamer of four alpha and four beta subunits. Component of the glycine, sarcosine and betaine reductase complexes, together with proteins A and B.

It catalyses the reaction acetyl phosphate + [thioredoxin]-disulfide + NH4(+) + H2O = [thioredoxin]-dithiol + glycine + phosphate + H(+). The catalysed reaction is acetyl phosphate + methylamine + [thioredoxin]-disulfide + H2O = sarcosine + [thioredoxin]-dithiol + phosphate + H(+). The enzyme catalyses acetyl phosphate + trimethylamine + [thioredoxin]-disulfide + H2O = glycine betaine + [thioredoxin]-dithiol + phosphate + H(+). In terms of biological role, in the first step of glycine, betaine and sarcosine reductases, the substrate is bound to component PB via a Schiff base intermediate. Then the PB-activated substrate is nucleophilically attacked by the selenol anion of component PA to transform it to a carboxymethylated selenoether and the respective amine. By action of component PC, acetyl phosphate is formed, leaving component PA in its oxidized state. Finally component PA becomes reduced by the thioredoxin system to start a new catalytic cycle of reductive deamination. The chain is Glycine/sarcosine/betaine reductase complex component C subunit beta (grdC) from Peptoclostridium acidaminophilum (Eubacterium acidaminophilum).